The primary structure comprises 75 residues: MKTLVLFIIFGLAALFLLSSANELEETERGCGLLMDACDGKSTFCCSGYNCSPTWKWCVLDCPNLFLLPPTKTLC.

Residues 1-21 form the signal peptide; that stretch reads MKTLVLFIIFGLAALFLLSSA. The propeptide occupies 22 to 29; that stretch reads NELEETER. 3 cysteine pairs are disulfide-bonded: Cys-31/Cys-46, Cys-38/Cys-51, and Cys-45/Cys-58.

It belongs to the neurotoxin 10 (Hwtx-1) family. 43 (Jztx-49) subfamily. Expressed by the venom gland.

Its subcellular location is the secreted. Functionally, probable ion channel inhibitor. The polypeptide is U9-theraphotoxin-Cg1a (Chilobrachys guangxiensis (Chinese earth tiger tarantula)).